The primary structure comprises 357 residues: A-type ATP synthase subunit C (357 aa).

It belongs to the V-ATPase V0D/AC39 subunit family. As to quaternary structure, has multiple subunits with at least A(3), B(3), C, D, E, F, H, I and proteolipid K(x).

The protein localises to the cell membrane. In terms of biological role, component of the A-type ATP synthase that produces ATP from ADP in the presence of a proton gradient across the membrane. The polypeptide is A-type ATP synthase subunit C (Methanococcoides burtonii (strain DSM 6242 / NBRC 107633 / OCM 468 / ACE-M)).